The sequence spans 165 residues: Serine/threonine-protein phosphatase 2A 56 kDa regulatory subunit epsilon isoform (165 aa).

Positions methionine 1–lysine 41 are disordered. The residue at position 2 (serine 2) is an N-acetylserine. Threonine 7 bears the Phosphothreonine mark. Over residues lysine 20–arginine 29 the composition is skewed to basic residues. Phosphoserine is present on residues serine 30, serine 32, and serine 34. The span at serine 30–lysine 41 shows a compositional bias: low complexity.

Belongs to the phosphatase 2A regulatory subunit B56 family. In terms of assembly, PP2A consists of a common heterodimeric core enzyme, composed of a 36 kDa catalytic subunit (subunit C) and a 65 kDa constant regulatory subunit (PR65 or subunit A), that associates with a variety of regulatory subunits. Proteins that associate with the core dimer include three families of regulatory subunits B (the R2/B/PR55/B55, R3/B''/PR72/PR130/PR59 and R5/B'/B56 families), the 48 kDa variable regulatory subunit, viral proteins, and cell signaling molecules. Interacts with SGO1. Found in a complex with at least ARL2, PPP2CB; PPP2R1A, PPP2R2A, PPP2R5E and TBCD. As to expression, highly expressed in testis, lung and brain.

The protein resides in the cytoplasm. Its function is as follows. The B regulatory subunit might modulate substrate selectivity and catalytic activity, and might also direct the localization of the catalytic enzyme to a particular subcellular compartment. The chain is Serine/threonine-protein phosphatase 2A 56 kDa regulatory subunit epsilon isoform (PPP2R5E) from Oryctolagus cuniculus (Rabbit).